The following is a 35-amino-acid chain: Cupiennin-1d (35 aa).

Glu-35 is modified (glutamic acid 1-amide).

It belongs to the cationic peptide 04 (cupiennin) family. 01 subfamily. In terms of tissue distribution, expressed by the venom gland.

Its subcellular location is the secreted. Its function is as follows. Has antimicrobial activity against B.subtilis, E.coli, E.faecalis, P.aeruginosa, and S.aureus. Has insecticidal and hemolytic activities. Probably acts by disturbing membrane function with its amphipathic structure. The sequence is that of Cupiennin-1d from Cupiennius salei (American wandering spider).